We begin with the raw amino-acid sequence, 116 residues long: Phosphoribosyl-AMP cyclohydrolase (116 aa).

Position 78 (Asp78) interacts with Mg(2+). Residue Cys79 participates in Zn(2+) binding. Residues Asp80 and Asp82 each coordinate Mg(2+). Zn(2+)-binding residues include Cys95 and Cys102.

Belongs to the PRA-CH family. In terms of assembly, homodimer. Mg(2+) is required as a cofactor. Requires Zn(2+) as cofactor.

It is found in the cytoplasm. It catalyses the reaction 1-(5-phospho-beta-D-ribosyl)-5'-AMP + H2O = 1-(5-phospho-beta-D-ribosyl)-5-[(5-phospho-beta-D-ribosylamino)methylideneamino]imidazole-4-carboxamide. Its pathway is amino-acid biosynthesis; L-histidine biosynthesis; L-histidine from 5-phospho-alpha-D-ribose 1-diphosphate: step 3/9. In terms of biological role, catalyzes the hydrolysis of the adenine ring of phosphoribosyl-AMP. This is Phosphoribosyl-AMP cyclohydrolase from Acidiphilium cryptum (strain JF-5).